We begin with the raw amino-acid sequence, 343 residues long: S-adenosylmethionine:tRNA ribosyltransferase-isomerase (343 aa).

Belongs to the QueA family. In terms of assembly, monomer.

The protein localises to the cytoplasm. It carries out the reaction 7-aminomethyl-7-carbaguanosine(34) in tRNA + S-adenosyl-L-methionine = epoxyqueuosine(34) in tRNA + adenine + L-methionine + 2 H(+). It participates in tRNA modification; tRNA-queuosine biosynthesis. Functionally, transfers and isomerizes the ribose moiety from AdoMet to the 7-aminomethyl group of 7-deazaguanine (preQ1-tRNA) to give epoxyqueuosine (oQ-tRNA). The chain is S-adenosylmethionine:tRNA ribosyltransferase-isomerase from Enterococcus faecalis (strain ATCC 700802 / V583).